We begin with the raw amino-acid sequence, 689 residues long: Small ribosomal subunit protein mS39 (689 aa).

The N-terminal 37 residues, 1–37 (MAGVSAVRWLGLRSRLGQPLTGRRAGLCKQARSCRFY), are a transit peptide targeting the mitochondrion. Lysine 126 is subject to N6-acetyllysine. 10 PPR repeats span residues 149–183 (IKDISEAALKERIELRKVKASVDMFDQLLQAGTTV), 184–219 (SLETTNSLLDLLCYFGDQEPSTDYHFQQTEQSEALE), 255–289 (NAHSYCTMIRGMVKHRAYEQALNLYTELLNNRLHA), 290–330 (DVYT…KVKP), 331–367 (NLQTFNTILKCLRRFHVFARSPALRILREMKAIGIEP), 368–404 (SLATYHHIIHVFDQPGDPLKRSSFIIYDIMNELMGKR), 412–446 (DDKFFQSAMSICSSLRDLELAYQVHGLLNTGDNWK), 454–488 (RNFYYSKFFDLICLMEQIDVTLKWYEDLIPSVYFP), 489–523 (HSQTLIHLLQALDVANRLEMIPKIWKDSKEYGHTF), and 572–606 (PATSLYCIAILFLRAGRTQEAWNMLELFRKHNKIP). Residues 665–689 (NLTALTSDSDTDSSSDSDSDTSEGK) are disordered. Residues 673-689 (SDTDSSSDSDSDTSEGK) are compositionally biased toward acidic residues.

It belongs to the mitochondrion-specific ribosomal protein mS39 family. In terms of assembly, component of the mitochondrial ribosome small subunit (28S) which comprises a 12S rRNA and about 30 distinct proteins. Associated with the 12S mitochondrial rRNA (12S mt-rRNA).

It localises to the mitochondrion. Its function is as follows. Mitochondrial RNA-binding protein that has a role in mitochondrial translation. This is Small ribosomal subunit protein mS39 (PTCD3) from Pongo abelii (Sumatran orangutan).